The primary structure comprises 589 residues: Arginine--tRNA ligase (589 aa).

Positions 132–142 match the 'HIGH' region motif; the sequence is PNTNKPLHVGH.

This sequence belongs to the class-I aminoacyl-tRNA synthetase family. Monomer.

It is found in the cytoplasm. The enzyme catalyses tRNA(Arg) + L-arginine + ATP = L-arginyl-tRNA(Arg) + AMP + diphosphate. The sequence is that of Arginine--tRNA ligase from Treponema pallidum subsp. pallidum (strain SS14).